Here is a 571-residue protein sequence, read N- to C-terminus: Septation ring formation regulator EzrA (571 aa).

Residues M1 to Y3 are Extracellular-facing. Residues M4 to L22 form a helical membrane-spanning segment. Over K23–E571 the chain is Cytoplasmic. 4 coiled-coil regions span residues L248 to E298, D326 to E374, K400 to R437, and R478 to F529.

This sequence belongs to the EzrA family.

The protein localises to the cell membrane. Negative regulator of FtsZ ring formation; modulates the frequency and position of FtsZ ring formation. Inhibits FtsZ ring formation at polar sites. Interacts either with FtsZ or with one of its binding partners to promote depolymerization. The polypeptide is Septation ring formation regulator EzrA (Listeria monocytogenes serovar 1/2a (strain ATCC BAA-679 / EGD-e)).